A 114-amino-acid chain; its full sequence is Chaperonin GroEL (114 aa).

22–26 (DGTTT) is a binding site for ATP.

The protein belongs to the chaperonin (HSP60) family. In terms of assembly, forms a cylinder of 14 subunits composed of two heptameric rings stacked back-to-back. Interacts with the co-chaperonin GroES.

The protein localises to the cytoplasm. The catalysed reaction is ATP + H2O + a folded polypeptide = ADP + phosphate + an unfolded polypeptide.. Its function is as follows. Together with its co-chaperonin GroES, plays an essential role in assisting protein folding. The GroEL-GroES system forms a nano-cage that allows encapsulation of the non-native substrate proteins and provides a physical environment optimized to promote and accelerate protein folding. This is Chaperonin GroEL from Mycobacterium ulcerans.